A 108-amino-acid polypeptide reads, in one-letter code: uncharacterized protein (108 aa).

The helical transmembrane segment at 72 to 94 (LGLHTSVFFFLRIVCMSSAASVF) threads the bilayer.

The protein resides in the membrane. This is an uncharacterized protein from Saccharomyces cerevisiae (strain ATCC 204508 / S288c) (Baker's yeast).